Reading from the N-terminus, the 427-residue chain is 12-alpha,13-alpha-dihydroxyfumitremorgin C prenyltransferase (427 aa).

E94 contacts substrate. 8 residues coordinate dimethylallyl diphosphate: R105, K192, Y194, Y268, Q353, Y355, Y419, and Y423.

Belongs to the tryptophan dimethylallyltransferase family.

The catalysed reaction is 12alpha,13alpha-dihydroxyfumitremorgin C + dimethylallyl diphosphate = fumitremorgin B + diphosphate. Its pathway is mycotoxin biosynthesis. Functionally, 12-alpha,13-alpha-dihydroxyfumitremorgin C prenyltransferase; part of the gene cluster that mediates the biosynthesis of fumitremorgins, indole alkaloids that carry not only intriguing chemical structures, but also interesting biological and pharmacological activities. The biosynthesis of fumitremorgin-type alkaloids begins by condensation of the two amino acids L-tryptophan and L-proline to brevianamide F, catalyzed by the non-ribosomal peptide synthetase ftmA. Brevianamide F is then prenylated by the prenyltransferase ftmPT1/ftmB in the presence of dimethylallyl diphosphate, resulting in the formation of tryprostatin B. The three cytochrome P450 monooxygenases, ftmP450-1/ftmC, ftmP450-2/ftmE and ftmP450-3/FtmG, are responsible for the conversion of tryprostatin B to 6-hydroxytryprostatin B, tryprostatin A to fumitremorgin C and fumitremorgin C to 12,13-dihydroxyfumitremorgin C, respectively. The putative methyltransferase ftmMT/ftmD is expected for the conversion of 6-hydroxytryprostatin B to tryprostatin A. FtmPT2/FtmH catalyzes the prenylation of 12,13-dihydroxyfumitre-morgin C in the presence of dimethylallyl diphosphate, resulting in the formation of fumitremorgin B. Fumitremorgin B is further converted to verruculogen by ftmOx1/ftmF via the insertion of an endoperoxide bond between the two prenyl moieties. In some fungal species, verruculogen is further converted to fumitremorgin A, but the enzymes involved in this step have not been identified yet. In Aspergillus fumigatus (strain ATCC MYA-4609 / CBS 101355 / FGSC A1100 / Af293) (Neosartorya fumigata), this protein is 12-alpha,13-alpha-dihydroxyfumitremorgin C prenyltransferase.